A 538-amino-acid chain; its full sequence is MARYIFVTGGVVSSLGKGLSSASLAYLLQSRGYKVRIRKLDPYLNVDPGTMSPFQHGEVFVTDDGAETDLDLGHYERFSGVSAKKSDNITTGKIYSDVLRKERKGEYLGKTVQVIPHITDRIKQFIKHDSSKEDFVICEIGGIVGDIESLPFVEAIRQFANDVGKKNALFIHLTLVPYLKASDEIKTKPTQHSVKELRSIGIQPDIIICRSERPIPLDHRKKISLFCNVDIKNVIETVDVRTIYEAPMSFFKEKLDLQVLNYFKLKSKKPANLNPWKKITKIILHNKKQVNIAIIGKYVELKDAYKSLDEALTHGGIDNKVKVNLVRIDSEKLKISEIKKKLKNISGILIPGGFGKRGTDGKIEAIKHARLNKIPFLGICYGMQMAIIEFARNQLNLKNATSSEFDKKGLPIIGLINEWTKDGKKIKGTDKDLGGTMRLGSYDAKLKDNSKISKIYKSKLIKERHRHRYEVNIAFKDKFEKKGMIFSGLSPDNKLPEIIELKNHPWFIGVQFHPEFKSRPLAPHPLFSSFIKAAKNHK.

The segment at 1–265 is amidoligase domain; sequence MARYIFVTGG…DLQVLNYFKL (265 aa). CTP is bound at residue Ser13. Residue Ser13 coordinates UTP. Residues 14-19 and Asp71 contribute to the ATP site; that span reads SLGKGL. 2 residues coordinate Mg(2+): Asp71 and Glu139. CTP-binding positions include 146–148, 186–191, and Lys222; these read DIE and KTKPTQ. UTP contacts are provided by residues 186–191 and Lys222; that span reads KTKPTQ. In terms of domain architecture, Glutamine amidotransferase type-1 spans 291–538; that stretch reads NIAIIGKYVE…SFIKAAKNHK (248 aa). An L-glutamine-binding site is contributed by Gly353. The active-site Nucleophile; for glutamine hydrolysis is Cys380. Residues 381–384, Glu404, and Arg468 each bind L-glutamine; that span reads YGMQ. Residues His513 and Glu515 contribute to the active site.

The protein belongs to the CTP synthase family. As to quaternary structure, homotetramer.

The enzyme catalyses UTP + L-glutamine + ATP + H2O = CTP + L-glutamate + ADP + phosphate + 2 H(+). It catalyses the reaction L-glutamine + H2O = L-glutamate + NH4(+). It carries out the reaction UTP + NH4(+) + ATP = CTP + ADP + phosphate + 2 H(+). It functions in the pathway pyrimidine metabolism; CTP biosynthesis via de novo pathway; CTP from UDP: step 2/2. With respect to regulation, allosterically activated by GTP, when glutamine is the substrate; GTP has no effect on the reaction when ammonia is the substrate. The allosteric effector GTP functions by stabilizing the protein conformation that binds the tetrahedral intermediate(s) formed during glutamine hydrolysis. Inhibited by the product CTP, via allosteric rather than competitive inhibition. In terms of biological role, catalyzes the ATP-dependent amination of UTP to CTP with either L-glutamine or ammonia as the source of nitrogen. Regulates intracellular CTP levels through interactions with the four ribonucleotide triphosphates. The protein is CTP synthase of Pelagibacter ubique (strain HTCC1062).